The sequence spans 453 residues: UDP-N-acetylmuramate--L-alanyl-gamma-D-glutamyl-meso-2,6-diaminoheptandioate ligase (453 aa).

Residue 111 to 117 participates in ATP binding; that stretch reads GTHGKTT.

This sequence belongs to the MurCDEF family. Mpl subfamily. Mg(2+) is required as a cofactor.

It carries out the reaction UDP-N-acetyl-alpha-D-muramate + L-alanyl-gamma-D-glutamyl-meso-2,6-diaminopimelate + ATP = UDP-N-acetyl-alpha-D-muramoyl-L-alanyl-gamma-D-glutamyl-meso-2,6-diaminopimelate + ADP + phosphate + H(+). Its pathway is cell wall biogenesis; peptidoglycan recycling. In terms of biological role, reutilizes the intact tripeptide L-alanyl-gamma-D-glutamyl-meso-diaminopimelate by linking it to UDP-N-acetylmuramate. This chain is UDP-N-acetylmuramate--L-alanyl-gamma-D-glutamyl-meso-2,6-diaminoheptandioate ligase, found in Haemophilus influenzae (strain ATCC 51907 / DSM 11121 / KW20 / Rd).